The primary structure comprises 223 residues: Deoxyribose-phosphate aldolase (223 aa).

Asp89 functions as the Proton donor/acceptor in the catalytic mechanism. Residue Lys152 is the Schiff-base intermediate with acetaldehyde of the active site. Residue Lys181 is the Proton donor/acceptor of the active site.

This sequence belongs to the DeoC/FbaB aldolase family. DeoC type 1 subfamily.

It is found in the cytoplasm. It catalyses the reaction 2-deoxy-D-ribose 5-phosphate = D-glyceraldehyde 3-phosphate + acetaldehyde. It functions in the pathway carbohydrate degradation; 2-deoxy-D-ribose 1-phosphate degradation; D-glyceraldehyde 3-phosphate and acetaldehyde from 2-deoxy-alpha-D-ribose 1-phosphate: step 2/2. Its function is as follows. Catalyzes a reversible aldol reaction between acetaldehyde and D-glyceraldehyde 3-phosphate to generate 2-deoxy-D-ribose 5-phosphate. In Listeria monocytogenes serotype 4b (strain CLIP80459), this protein is Deoxyribose-phosphate aldolase.